Reading from the N-terminus, the 465-residue chain is VGFKAGVKDYKLTYYTPEYETKDTDILAAFRVTPQPGVPPEEAGAAVAAESSTGTWTTVWTDGLTSLDRYKGRCYHIEPVAGEENQYIAYVAYPLDLFEEGSVTNMFTSIVGNVFGFKALRALRLEDLRVPTSYIKTFQGPPHGIQVERDKLNKYGRPLLGCTIKPKLGLSAKNYGRAVYECLRGGLDFTKDDENVNSQPFMRWRDRFLFCAEAIYKAQAETGEIKGHYLNATAGTCEEMIKRAVCARELGAPIVMHDYLTGGFTANTTLAHYCRDNGLLLHIHRAMHAVIDRQKNHGMHFRVLAKALRLSGGDHIHAGTVVGKLEGEREITLGFVDLLRDDFVEKDRSRGIYFTQDWVSLPGVLPVASGGIHVWHMPALTEIFGDDSVLQFGGGTLGHPWGNAPGAVANRVALEACVQARNEGRDLAREGNEIIREASKWSPELAAACEVWKAIKFEFPAMDTL.

Position 4 is an N6,N6,N6-trimethyllysine (Lys-4). Substrate-binding residues include Asn-113 and Thr-163. Lys-165 (proton acceptor) is an active-site residue. Lys-167 contacts substrate. Positions 191, 193, and 194 each coordinate Mg(2+). Position 191 is an N6-carboxylysine (Lys-191). His-284 acts as the Proton acceptor in catalysis. Positions 285, 317, and 369 each coordinate substrate.

This sequence belongs to the RuBisCO large chain family. Type I subfamily. As to quaternary structure, heterohexadecamer of 8 large chains and 8 small chains; disulfide-linked. The disulfide link is formed within the large subunit homodimers. Mg(2+) is required as a cofactor. The disulfide bond which can form in the large chain dimeric partners within the hexadecamer appears to be associated with oxidative stress and protein turnover.

The protein localises to the plastid. It localises to the chloroplast. The catalysed reaction is 2 (2R)-3-phosphoglycerate + 2 H(+) = D-ribulose 1,5-bisphosphate + CO2 + H2O. It catalyses the reaction D-ribulose 1,5-bisphosphate + O2 = 2-phosphoglycolate + (2R)-3-phosphoglycerate + 2 H(+). RuBisCO catalyzes two reactions: the carboxylation of D-ribulose 1,5-bisphosphate, the primary event in carbon dioxide fixation, as well as the oxidative fragmentation of the pentose substrate in the photorespiration process. Both reactions occur simultaneously and in competition at the same active site. The chain is Ribulose bisphosphate carboxylase large chain from Clitoria ternatea (Butterfly pea).